Here is a 111-residue protein sequence, read N- to C-terminus: Ribosome-binding factor A (111 aa).

It belongs to the RbfA family. In terms of assembly, monomer. Binds 30S ribosomal subunits, but not 50S ribosomal subunits or 70S ribosomes.

It is found in the cytoplasm. Functionally, one of several proteins that assist in the late maturation steps of the functional core of the 30S ribosomal subunit. Associates with free 30S ribosomal subunits (but not with 30S subunits that are part of 70S ribosomes or polysomes). Required for efficient processing of 16S rRNA. May interact with the 5'-terminal helix region of 16S rRNA. The chain is Ribosome-binding factor A from Helicobacter pylori (strain P12).